The primary structure comprises 254 residues: Glucosamine-6-phosphate deaminase (254 aa).

The active-site Proton acceptor; for enolization step is the Asp65. The For ring-opening step role is filled by Asn134. His136 serves as the catalytic Proton acceptor; for ring-opening step. Glu141 functions as the For ring-opening step in the catalytic mechanism.

Belongs to the glucosamine/galactosamine-6-phosphate isomerase family. NagB subfamily.

The catalysed reaction is alpha-D-glucosamine 6-phosphate + H2O = beta-D-fructose 6-phosphate + NH4(+). It functions in the pathway amino-sugar metabolism; N-acetylneuraminate degradation; D-fructose 6-phosphate from N-acetylneuraminate: step 5/5. Catalyzes the reversible isomerization-deamination of glucosamine 6-phosphate (GlcN6P) to form fructose 6-phosphate (Fru6P) and ammonium ion. The sequence is that of Glucosamine-6-phosphate deaminase from Corynebacterium aurimucosum (strain ATCC 700975 / DSM 44827 / CIP 107346 / CN-1) (Corynebacterium nigricans).